Consider the following 761-residue polypeptide: BMP/retinoic acid-inducible neural-specific protein 1 (761 aa).

Residues 1–19 (MNWRFVELLYFLFIWGRIS) form the signal peptide. Residues 68–251 (RYKIYREFAR…FVQSALSYIM (184 aa)) form the MACPF domain. N-linked (GlcNAc...) asparagine glycans are attached at residues Asn-156, Asn-433, Asn-443, Asn-553, Asn-599, Asn-631, and Asn-677.

The protein belongs to the BRINP family. Highly expressed in brain. Weakly expressed in heart, lung, skeletal muscle, kidney, thymus, prostate, testis and small intestine.

The protein localises to the cytoplasm. In terms of biological role, plays a role in neurogenesis and brain development. May suppress cell cycle progression in postmitotic neurons by inhibiting G1/S transition. This Homo sapiens (Human) protein is BMP/retinoic acid-inducible neural-specific protein 1 (BRINP1).